An 83-amino-acid chain; its full sequence is MSSGGLLLLLGLLTLWEVLTPVSSKDRPEFCELPADPGPCNALSQAYYYNPVQHKCLKFRYGGCKANPNTFKTIEECKRTCAA.

An N-terminal signal peptide occupies residues 1–24 (MSSGGLLLLLGLLTLWEVLTPVSS). The BPTI/Kunitz inhibitor domain maps to 31 to 81 (CELPADPGPCNALSQAYYYNPVQHKCLKFRYGGCKANPNTFKTIEECKRTC). 3 cysteine pairs are disulfide-bonded: Cys-31–Cys-81, Cys-40–Cys-64, and Cys-56–Cys-77.

It belongs to the venom Kunitz-type family. Expressed by the venom gland.

The protein localises to the secreted. Its function is as follows. Serine protease inhibitor. The protein is Kunitz-type serine protease inhibitor stephenin-1 of Hoplocephalus stephensii (Stephens's banded snake).